The following is a 489-amino-acid chain: Tandem C2 domains nuclear protein (489 aa).

A phosphoserine mark is found at Ser82, Ser155, Ser167, Ser173, and Ser210. The segment at 189 to 214 (DSFSSVPSSSSSRKNSQGSNRSLDTI) is disordered. The segment covering 191 to 210 (FSSVPSSSSSRKNSQGSNRS) has biased composition (low complexity). 2 positions are modified to phosphothreonine: Thr213 and Thr215. A Phosphoserine modification is found at Ser217. 2 C2 domains span residues 222 to 341 (DLGR…SLEI) and 343 to 470 (APSK…NQWK). Positions 446-448 (RRK) match the Nuclear localization signal motif.

Its subcellular location is the nucleus. This Mus musculus (Mouse) protein is Tandem C2 domains nuclear protein (Tc2n).